The chain runs to 116 residues: Ribonuclease T (116 aa).

The region spanning 18-99 (KRAILVGHNS…YDTEKTAELF (82 aa)) is the Exonuclease domain. His86 serves as the catalytic Proton donor/acceptor.

It belongs to the RNase T family. In terms of assembly, homodimer.

Functionally, trims short 3' overhangs of a variety of RNA species, leaving a one or two nucleotide 3' overhang. Responsible for the end-turnover of tRNA: specifically removes the terminal AMP residue from uncharged tRNA (tRNA-C-C-A). Also appears to be involved in tRNA biosynthesis. This chain is Ribonuclease T, found in Azotobacter vinelandii.